The following is a 128-amino-acid chain: Light-regulated protein, chloroplastic (128 aa).

2 consecutive repeat copies span residues 58 to 72 (VFPM…GEAC) and 111 to 125 (VFPE…GEFC). Residues 58 to 125 (VFPMEACDLI…ACDDLGGEFC (68 aa)) are 2 X 15 AA approximate repeats.

As to quaternary structure, component of high molecular weight thylakoid LFNRs-containing protein complexes containing LIR1, LFNR1, LFNR2, TIC62 and TROL proteins. Interacts directly with LFNR1 and LFNR2; LIR1 increases the affinity of LFNR1 and LFNR2 for TIC62 and subsequent thylakoid relocalization. May form interchain disulfide bonds with LFNR1 and LFNR2.

It localises to the plastid. It is found in the chloroplast thylakoid membrane. The protein localises to the chloroplast envelope. Its subcellular location is the chloroplast stroma. Functionally, thylakoid-determinant subunit of high molecular weight LFNRs-containing protein complexes. The protein is Light-regulated protein, chloroplastic (LIR1) of Oryza sativa subsp. japonica (Rice).